The sequence spans 141 residues: Large ribosomal subunit protein uL11 (141 aa).

The protein belongs to the universal ribosomal protein uL11 family. In terms of assembly, part of the ribosomal stalk of the 50S ribosomal subunit. Interacts with L10 and the large rRNA to form the base of the stalk. L10 forms an elongated spine to which L12 dimers bind in a sequential fashion forming a multimeric L10(L12)X complex. One or more lysine residues are methylated.

Forms part of the ribosomal stalk which helps the ribosome interact with GTP-bound translation factors. This chain is Large ribosomal subunit protein uL11, found in Syntrophus aciditrophicus (strain SB).